A 471-amino-acid chain; its full sequence is Trimethyllysine dioxygenase (471 aa).

Residues His-251 and Asp-253 each coordinate Fe cation. The segment at 272-302 (KAAPSRPPPPPPPPPPPSEEKEAAGSAAGEA) is disordered. A compositionally biased stretch (pro residues) spans 276–288 (SRPPPPPPPPPPP). His-430 contributes to the Fe cation binding site.

The protein belongs to the gamma-BBH/TMLD family. Fe(2+) serves as cofactor. L-ascorbate is required as a cofactor.

It is found in the cytoplasm. It catalyses the reaction N(6),N(6),N(6)-trimethyl-L-lysine + 2-oxoglutarate + O2 = (3S)-3-hydroxy-N(6),N(6),N(6)-trimethyl-L-lysine + succinate + CO2. Its pathway is amine and polyamine biosynthesis; carnitine biosynthesis. Functionally, converts trimethyllysine (TML) into hydroxytrimethyllysine (HTML). In Neurospora crassa (strain ATCC 24698 / 74-OR23-1A / CBS 708.71 / DSM 1257 / FGSC 987), this protein is Trimethyllysine dioxygenase (cbs-1).